Reading from the N-terminus, the 384-residue chain is Proteinase K (384 aa).

An N-terminal signal peptide occupies residues 1-15 (MRLSVLLSLLPLALG). The propeptide occupies 16–105 (APAVEQRSEA…IEQDAVVTIN (90 aa)). The Inhibitor I9 domain maps to 39 to 104 (KYIVKFKEGS…YIEQDAVVTI (66 aa)). One can recognise a Peptidase S8 domain in the interval 112-384 (PWGLARISST…NLLAYNNYQA (273 aa)). Thr-121 serves as a coordination point for Ca(2+). A disulfide bridge links Cys-139 with Cys-228. Residues Asp-144 and His-174 each act as charge relay system in the active site. Ca(2+)-binding residues include Pro-280, Val-282, and Asp-305. A disulfide bond links Cys-283 and Cys-354. Catalysis depends on Ser-329, which acts as the Charge relay system. Asp-365 is a Ca(2+) binding site.

This sequence belongs to the peptidase S8 family. Ca(2+) serves as cofactor.

It carries out the reaction Hydrolysis of keratin, and of other proteins with subtilisin-like specificity. Hydrolyzes peptide amides.. Functionally, hydrolyzes keratin at aromatic and hydrophobic residues. This chain is Proteinase K (PROK), found in Parengyodontium album (Tritirachium album).